The sequence spans 104 residues: uncharacterized protein (104 aa).

Helical transmembrane passes span 47-67 (IDHR…LAML) and 72-92 (VGHV…FVLA).

It to M.leprae ML1584.

Its subcellular location is the cell membrane. This is an uncharacterized protein from Mycobacterium tuberculosis (strain CDC 1551 / Oshkosh).